The sequence spans 228 residues: 7-cyano-7-deazaguanine synthase (228 aa).

8–18 (LSGGMDSATTL) contacts ATP. Zn(2+)-binding residues include C188, C198, C201, and C204.

This sequence belongs to the QueC family. Zn(2+) is required as a cofactor.

It catalyses the reaction 7-carboxy-7-deazaguanine + NH4(+) + ATP = 7-cyano-7-deazaguanine + ADP + phosphate + H2O + H(+). The protein operates within purine metabolism; 7-cyano-7-deazaguanine biosynthesis. Functionally, catalyzes the ATP-dependent conversion of 7-carboxy-7-deazaguanine (CDG) to 7-cyano-7-deazaguanine (preQ(0)). The polypeptide is 7-cyano-7-deazaguanine synthase (Nitrosomonas europaea (strain ATCC 19718 / CIP 103999 / KCTC 2705 / NBRC 14298)).